A 974-amino-acid chain; its full sequence is Exocyst complex component 4 (974 aa).

Ala2 carries the N-acetylalanine modification. The residue at position 9 (Lys9) is an N6-acetyllysine. Phosphoserine occurs at positions 32 and 226. The stretch at 32–114 (STSDDVEDRE…HCKRDELRKL (83 aa)) forms a coiled coil. Residues Thr233 and Thr237 each carry the phosphothreonine modification. Residue Ser468 is modified to Phosphoserine.

The protein belongs to the SEC8 family. The exocyst complex is composed of EXOC1, EXOC2, EXOC3, EXOC4, EXOC5, EXOC6, EXOC7 and EXOC8. Interacts with BIRC6/bruce. Interacts with MYRIP. Interacts with SH3BP1; required for the localization of both SH3BP1 and the exocyst to the leading edge of migrating cells. Interacts with SLC6A9.

Its subcellular location is the midbody. The protein localises to the midbody ring. The protein resides in the cell projection. It is found in the cytoplasm. It localises to the cytoskeleton. Its subcellular location is the microtubule organizing center. The protein localises to the centrosome. Component of the exocyst complex involved in the docking of exocytic vesicles with fusion sites on the plasma membrane. This chain is Exocyst complex component 4 (EXOC4), found in Homo sapiens (Human).